A 956-amino-acid chain; its full sequence is Angiomotin-like protein 1 (956 aa).

Residues 197-246 (QSQFFRGQQQQQQQQGAVGHGYYMAGGTSQKSRTEGRPTVNRANSGQAHK) form a disordered region. 2 positions are modified to phosphoserine: S241 and S269. A coiled-coil region spans residues 259–279 (RSLSERIMQLSLERNGAKQHL). 3 disordered regions span residues 274–322 (GAKQ…QMMS), 382–405 (PSTM…LHSV), and 411–430 (LPMA…SQQL). Positions 282 to 294 (SGNGKGFKVGGGP) are enriched in gly residues. Phosphoserine is present on S295. The segment covering 382–398 (PSTMQQHSPMSSQTSSA) has biased composition (polar residues). Coiled-coil stretches lie at residues 438-639 (VERA…WLER) and 665-694 (ALLE…YLEE). S720 is modified (phosphoserine). Residues 729 to 762 (SLEAHIWQEEEEVVQANRRCQDMEYTIKNLHAKI) are a coiled coil. The interval 773–823 (QQRSRKDAGKTDSSSLRPARSVPSIAAATGTHSRQTSLTSSQLAEEKKEEK) is disordered. A phosphoserine mark is found at S793, S805, and S828. A compositionally biased stretch (polar residues) spans 802–815 (GTHSRQTSLTSSQL). Disordered stretches follow at residues 841–880 (ASAP…TQTD) and 894–944 (PSRG…LHKP). The span at 852-866 (SALSSIASTTAASSA) shows a compositional bias: low complexity. S900 is subject to Phosphoserine. Position 902 is a phosphothreonine (T902). S906 is subject to Phosphoserine. The short motif at 953 to 956 (EVLI) is the PDZ-binding element.

Belongs to the angiomotin family. Post-translationally, polyubiquitinated by NEDD4, leading to proteasomal degradation.

It localises to the cell junction. The protein localises to the tight junction. Inhibits the Wnt/beta-catenin signaling pathway, probably by recruiting CTNNB1 to recycling endosomes and hence preventing its translocation to the nucleus. This Homo sapiens (Human) protein is Angiomotin-like protein 1 (AMOTL1).